A 463-amino-acid polypeptide reads, in one-letter code: MVAAAVAAAEQVVAALREECATPAARLDGVAAAMAGEMAAGLAEEGGSKIKMIVSYVDNLPNGTEEGLFYALDLGGTNFRVLRVQLAGKEKRVVKRESREVSIPPHLMSGNSSELFGFIASALAKFVADEGHNAVFNDRQRELGFTFSFPVRQTSIASGTLIKWTKAFSIDDAVGEDVVAELQMAMEKQGLDMRVSALINDTVGTLAAGSYYDEDIVVGVILGTGSNAAYLEKANAIPKLEGELPKSGNMVINTEWGNFSSSCLPITEYDEALDKESLNPGEQIFEKLISGMYLGEIVRRVLLKISLQSSIFGNLDQTKLKTRFILRTPDISVMHHDGTPDLRIVAEKLADNLKITDTSLETRKMVVEICDIVTRRSARLAAAGIVGILRKIGRGVPGDKRKSVIAIDGGLYEHYTEFRQCLETTLTELLGEEASKSVAVKLANDGSGLGAALIAAAHSQYLN.

Positions 7 to 456 (AAAEQVVAAL…SGLGAALIAA (450 aa)) constitute a Hexokinase domain. A hexokinase small subdomain region spans residues 62-199 (NGTEEGLFYA…GLDMRVSALI (138 aa)). ADP contacts are provided by Gly-76, Thr-77, and Asn-78. Residues Thr-165, Lys-166, Asn-200, and Asp-201 each contribute to the D-glucose site. Positions 200-445 (NDTVGTLAAG…KSVAVKLAND (246 aa)) are hexokinase large subdomain. Thr-224 contacts ADP. D-glucose-binding residues include Asn-227, Glu-255, and Glu-286. Gly-410 contributes to the ADP binding site.

The protein belongs to the hexokinase family. As to expression, expressed in roots, leaves, flowers, immature seeds and seed coat.

Its subcellular location is the cytoplasm. The enzyme catalyses a D-hexose + ATP = a D-hexose 6-phosphate + ADP + H(+). It catalyses the reaction D-fructose + ATP = D-fructose 6-phosphate + ADP + H(+). It carries out the reaction D-glucose + ATP = D-glucose 6-phosphate + ADP + H(+). It participates in carbohydrate metabolism; hexose metabolism. It functions in the pathway carbohydrate degradation; glycolysis; D-glyceraldehyde 3-phosphate and glycerone phosphate from D-glucose: step 1/4. Functionally, fructose and glucose phosphorylating enzyme. Functions in sugar signaling via a glycolysis-dependent manner under aerobic conditions, but its signaling role is suppressed when oxygen is deficient. This Oryza sativa subsp. japonica (Rice) protein is Hexokinase-7 (HXK7).